A 256-amino-acid chain; its full sequence is Imidazole glycerol phosphate synthase subunit hisF1 (256 aa).

Catalysis depends on residues aspartate 12 and aspartate 131.

The protein belongs to the HisA/HisF family. In terms of assembly, heterodimer of HisH and HisF.

The protein localises to the cytoplasm. The catalysed reaction is 5-[(5-phospho-1-deoxy-D-ribulos-1-ylimino)methylamino]-1-(5-phospho-beta-D-ribosyl)imidazole-4-carboxamide + L-glutamine = D-erythro-1-(imidazol-4-yl)glycerol 3-phosphate + 5-amino-1-(5-phospho-beta-D-ribosyl)imidazole-4-carboxamide + L-glutamate + H(+). It functions in the pathway amino-acid biosynthesis; L-histidine biosynthesis; L-histidine from 5-phospho-alpha-D-ribose 1-diphosphate: step 5/9. IGPS catalyzes the conversion of PRFAR and glutamine to IGP, AICAR and glutamate. The HisF subunit catalyzes the cyclization activity that produces IGP and AICAR from PRFAR using the ammonia provided by the HisH subunit. This is Imidazole glycerol phosphate synthase subunit hisF1 (hisF1) from Pseudomonas aeruginosa (strain ATCC 15692 / DSM 22644 / CIP 104116 / JCM 14847 / LMG 12228 / 1C / PRS 101 / PAO1).